The sequence spans 347 residues: Homoisocitrate dehydrogenase (347 aa).

NADH is bound at residue 68–70 (ITS). Ser70 is a (2R,3S)-homoisocitrate binding site. The residue at position 81 (Ser81) is a Phosphoserine. (2R,3S)-homoisocitrate is bound by residues Arg87, Arg97, Arg128, Tyr135, Lys181, and Asn183. Asn183 serves as a coordination point for NADH. Mg(2+) contacts are provided by Asp213, Asp237, and Asp241. NADH contacts are provided by residues 270 to 274 (GSAPD) and Asn282.

Belongs to the isocitrate and isopropylmalate dehydrogenases family. It depends on Mg(2+) as a cofactor.

It carries out the reaction (2R,3S)-homoisocitrate + NAD(+) = 2-oxoadipate + CO2 + NADH. The enzyme catalyses (2R,3S)-iso(homo)2citrate + NAD(+) = 2-oxoheptanedioate + CO2 + NADH. It catalyses the reaction (2R,3S)-iso(homo)3citrate + NAD(+) = 2-oxosuberate + CO2 + NADH. Its pathway is organic acid metabolism; 2-oxosuberate biosynthesis. In terms of biological role, catalyzes the NAD-dependent oxidation and decarboxylation of (2R,3S)-homoisocitrate, (2R,3S)-homo(2)-isocitrate and (2R,3S)-homo(3)-isocitrate, into 2-oxoadipate, 2-oxopimelate (2-oxoheptanedioate), and 2-oxosuberate, respectively. All these substrates are intermediates in the biosynthesis of biotin and of 7-mercaptoheptanoate, a moiety of coenzyme B in methanoarchaea. Is also able to produce 2-oxoazelate from (2R,3S)-homo(4)-isocitrate in vitro, but this substrate is probably not physiologically relevant. Is unable to use any isomer of isocitrate or isopropylmalate as a substrate, and NADP as an oxidant. The protein is Homoisocitrate dehydrogenase (aksF) of Methanocaldococcus jannaschii (strain ATCC 43067 / DSM 2661 / JAL-1 / JCM 10045 / NBRC 100440) (Methanococcus jannaschii).